Reading from the N-terminus, the 585-residue chain is Protein NRT1/ PTR FAMILY 4.6 (585 aa).

A run of 12 helical transmembrane segments spans residues 28-48, 75-95, 96-116, 142-162, 184-204, 211-231, 343-363, 391-411, 428-448, 465-485, 508-528, and 554-574; these read GMLAASFVLVVEILENLAYLA, FMGTAFLLALLGGFLSDAFFS, TFQIFLISASIEFLGLIILTI, AMLFVGLYLVALGVGGIKGSL, FFNYFVFCLACGALVAVTFVV, GWEWGFGVSTIAIFVSILIFL, IVLKMLPIFACTIMLNCCLAQ, IFPVVFIMILAPIYDHLIIPF, IGVGLVLSILAMAVAALVEIK, LPVTFLWIALQYLFLGSADLF, SLSWASLAMGYYLSSVIVSIV, and FYWLMCVLSAANFLHYLFWAM.

The protein belongs to the major facilitator superfamily. Proton-dependent oligopeptide transporter (POT/PTR) (TC 2.A.17) family. In terms of tissue distribution, expressed in root hairs and in epidermis of both root tips and mature regions of roots. Detected in shoots, stems, flowers, siliques and imbibed seeds. Expressed in vascular tissues in cotyledons, trus leaves, hypocotyls, roots and inflorescence stems.

Its subcellular location is the cell membrane. Functionally, low-affinity proton-dependent nitrate transporter. Involved in constitutive nitrate uptake. Not involved in histidine or dipeptides transport. Involved in (+)-abscisic acid (ABA) transport, but not in gibberellin, indole-3-acetic acid or jasmonic acid import. Mediates cellular ABA uptake. Nitrate does not compete with abscisic acid as a substrate of NPF4.6. The protein is Protein NRT1/ PTR FAMILY 4.6 (NPF4.6) of Arabidopsis thaliana (Mouse-ear cress).